The sequence spans 256 residues: Imidazole glycerol phosphate synthase subunit HisF (256 aa).

Active-site residues include Asp12 and Asp131.

It belongs to the HisA/HisF family. Heterodimer of HisH and HisF.

It localises to the cytoplasm. It catalyses the reaction 5-[(5-phospho-1-deoxy-D-ribulos-1-ylimino)methylamino]-1-(5-phospho-beta-D-ribosyl)imidazole-4-carboxamide + L-glutamine = D-erythro-1-(imidazol-4-yl)glycerol 3-phosphate + 5-amino-1-(5-phospho-beta-D-ribosyl)imidazole-4-carboxamide + L-glutamate + H(+). It functions in the pathway amino-acid biosynthesis; L-histidine biosynthesis; L-histidine from 5-phospho-alpha-D-ribose 1-diphosphate: step 5/9. In terms of biological role, IGPS catalyzes the conversion of PRFAR and glutamine to IGP, AICAR and glutamate. The HisF subunit catalyzes the cyclization activity that produces IGP and AICAR from PRFAR using the ammonia provided by the HisH subunit. In Pseudomonas putida (strain GB-1), this protein is Imidazole glycerol phosphate synthase subunit HisF.